The primary structure comprises 203 residues: MFAYFRGRLTSAMPDEAVVDVSGIGYRFLVSAFTYRQLPPPGEDVLLYAHLSVKEDAFLLYGFSSESERQLFRLLLLTTGVGPKLALAVLSGLQVHEVHEAIMANAPERLYGISGVGKKTAARIILELRDRILKMSPDGGKTIASGSGGNLALQIKDDALNALITLGFSKPAAQKAVTGILEGNPSLSVEEVVKSALVSIHNS.

Residues 1–64 are domain I; sequence MFAYFRGRLT…EDAFLLYGFS (64 aa). The segment at 65–143 is domain II; sequence SESERQLFRL…KMSPDGGKTI (79 aa). Residues 144–150 form a flexible linker region; the sequence is ASGSGGN. The segment at 151 to 203 is domain III; it reads LALQIKDDALNALITLGFSKPAAQKAVTGILEGNPSLSVEEVVKSALVSIHNS.

Belongs to the RuvA family. In terms of assembly, homotetramer. Forms an RuvA(8)-RuvB(12)-Holliday junction (HJ) complex. HJ DNA is sandwiched between 2 RuvA tetramers; dsDNA enters through RuvA and exits via RuvB. An RuvB hexamer assembles on each DNA strand where it exits the tetramer. Each RuvB hexamer is contacted by two RuvA subunits (via domain III) on 2 adjacent RuvB subunits; this complex drives branch migration. In the full resolvosome a probable DNA-RuvA(4)-RuvB(12)-RuvC(2) complex forms which resolves the HJ.

Its subcellular location is the cytoplasm. The RuvA-RuvB-RuvC complex processes Holliday junction (HJ) DNA during genetic recombination and DNA repair, while the RuvA-RuvB complex plays an important role in the rescue of blocked DNA replication forks via replication fork reversal (RFR). RuvA specifically binds to HJ cruciform DNA, conferring on it an open structure. The RuvB hexamer acts as an ATP-dependent pump, pulling dsDNA into and through the RuvAB complex. HJ branch migration allows RuvC to scan DNA until it finds its consensus sequence, where it cleaves and resolves the cruciform DNA. This chain is Holliday junction branch migration complex subunit RuvA, found in Chlorobium limicola (strain DSM 245 / NBRC 103803 / 6330).